A 219-amino-acid chain; its full sequence is UPF0619 GPI-anchored membrane protein AFUA_3G00880 (219 aa).

A signal peptide spans 1–16 (MRFALTLTAFVGSVAA). N-linked (GlcNAc...) asparagine glycosylation is present at asparagine 85. 2 disordered regions span residues 107–144 (SQQF…GTVS) and 160–205 (SSTL…SLTV). Low complexity predominate over residues 114–144 (SSGSSTTSDSTSSASATGSASTSSSSTGTVS). Asparagine 198 carries the GPI-like-anchor amidated asparagine lipid modification. The propeptide at 199–219 (GAGSLTVPAGSLLLGLVALAL) is removed in mature form.

This sequence belongs to the UPF0619 family. In terms of processing, the GPI-like anchor contains a phosphoceramide lipid group. The anchor position has not been determined.

The protein localises to the cell membrane. This chain is UPF0619 GPI-anchored membrane protein AFUA_3G00880, found in Aspergillus fumigatus (strain ATCC MYA-4609 / CBS 101355 / FGSC A1100 / Af293) (Neosartorya fumigata).